The sequence spans 503 residues: Transcriptional regulator LovE (503 aa).

The segment at residues 35–67 is a DNA-binding region (zn(2)-C6 fungal-type); sequence CDRCHAQKIKCTGNKEVTGRAPCQRCQQAGLRC. Disordered regions lie at residues 89-124 and 331-358; these read ADPD…RQFL and SHMS…HSSV. A compositionally biased stretch (low complexity) spans 339–357; sequence SRSQSPSRDDTSSSSGHSS.

It localises to the nucleus. Functionally, transcription factor that regulates the expression of the he gene cluster that mediates the biosynthesis of lovastatin (also known as mevinolin, mevacor or monacolin K), a hypolipidemic inhibitor of (3S)-hydroxymethylglutaryl-coenzyme A (HMG-CoA) reductase (HMGR). The chain is Transcriptional regulator LovE from Aspergillus terreus.